The sequence spans 311 residues: tRNA-cytidine(32) 2-sulfurtransferase (311 aa).

The short motif at 47 to 52 (SGGKDS) is the PP-loop motif element. [4Fe-4S] cluster-binding residues include Cys122, Cys125, and Cys213.

Belongs to the TtcA family. In terms of assembly, homodimer. Requires Mg(2+) as cofactor. [4Fe-4S] cluster is required as a cofactor.

It localises to the cytoplasm. It catalyses the reaction cytidine(32) in tRNA + S-sulfanyl-L-cysteinyl-[cysteine desulfurase] + AH2 + ATP = 2-thiocytidine(32) in tRNA + L-cysteinyl-[cysteine desulfurase] + A + AMP + diphosphate + H(+). The protein operates within tRNA modification. Its function is as follows. Catalyzes the ATP-dependent 2-thiolation of cytidine in position 32 of tRNA, to form 2-thiocytidine (s(2)C32). The sulfur atoms are provided by the cysteine/cysteine desulfurase (IscS) system. This Citrobacter koseri (strain ATCC BAA-895 / CDC 4225-83 / SGSC4696) protein is tRNA-cytidine(32) 2-sulfurtransferase.